Reading from the N-terminus, the 946-residue chain is Bifunctional glutamine synthetase adenylyltransferase/adenylyl-removing enzyme (946 aa).

An adenylyl removase region spans residues 1–440; sequence MKPLSSPLQQ…VFNELIGDDE (440 aa). The tract at residues 449–946 is adenylyl transferase; it reads SEQWRELWQD…ASWQKWLVEE (498 aa).

It belongs to the GlnE family. The cofactor is Mg(2+).

It catalyses the reaction [glutamine synthetase]-O(4)-(5'-adenylyl)-L-tyrosine + phosphate = [glutamine synthetase]-L-tyrosine + ADP. The enzyme catalyses [glutamine synthetase]-L-tyrosine + ATP = [glutamine synthetase]-O(4)-(5'-adenylyl)-L-tyrosine + diphosphate. Involved in the regulation of glutamine synthetase GlnA, a key enzyme in the process to assimilate ammonia. When cellular nitrogen levels are high, the C-terminal adenylyl transferase (AT) inactivates GlnA by covalent transfer of an adenylyl group from ATP to specific tyrosine residue of GlnA, thus reducing its activity. Conversely, when nitrogen levels are low, the N-terminal adenylyl removase (AR) activates GlnA by removing the adenylyl group by phosphorolysis, increasing its activity. The regulatory region of GlnE binds the signal transduction protein PII (GlnB) which indicates the nitrogen status of the cell. In Escherichia coli O127:H6 (strain E2348/69 / EPEC), this protein is Bifunctional glutamine synthetase adenylyltransferase/adenylyl-removing enzyme.